The chain runs to 563 residues: Calnexin homolog (563 aa).

The first 23 residues, 1-23, serve as a signal peptide directing secretion; sequence MRFNAAITGALVSSATLMGQAHA. The Lumenal portion of the chain corresponds to 24 to 493; sequence EETEKKADAT…PINAVKQVPE (470 aa). Ca(2+) is bound at residue aspartate 98. Cysteine 141 and cysteine 175 are disulfide-bonded. Tyrosine 145, lysine 147, tyrosine 166, and aspartate 173 together coordinate an alpha-D-glucoside. Asparagine 236 carries an N-linked (GlcNAc...) asparagine glycan. A disordered region spans residues 241-323; the sequence is EDFAPPVNPE…EKPEDWDDEE (83 aa). The segment covering 249-279 has biased composition (basic and acidic residues); the sequence is PEKEIDDPKDKKPADWVDEAKIPDPEAKKPD. The tract at residues 253–386 is p domain (Extended arm); the sequence is IDDPKDKKPA…RKIPNPAYFE (134 aa). A compositionally biased stretch (acidic residues) spans 280–305; that stretch reads DWDEDAPYEIVDEEATMPEDWLEDEP. An intrachain disulfide couples cysteine 337 to cysteine 343. An an alpha-D-glucoside-binding site is contributed by glutamate 402. Aspartate 413 is a Ca(2+) binding site. The chain crosses the membrane as a helical span at residues 494–514; the sequence is VAGGLGALLLTMILVIVGAVG. The Cytoplasmic portion of the chain corresponds to 515–563; the sequence is ASSPAPAAAAKKGKEAASAAKEKASEAVSSAADTAKGAATKRNTRSSAQ. The segment at 521–563 is disordered; it reads AAAAKKGKEAASAAKEKASEAVSSAADTAKGAATKRNTRSSAQ. Over residues 526–539 the composition is skewed to basic and acidic residues; sequence KGKEAASAAKEKAS.

The protein belongs to the calreticulin family.

Its subcellular location is the endoplasmic reticulum membrane. Interacts with newly synthesized monoglucosylated glycoproteins in the endoplasmic reticulum. It may act in assisting protein assembly and/or in the retention within the ER of unassembled protein subunits. It seems to play a major role in the quality control apparatus of the ER by the retention of incorrectly folded proteins. This chain is Calnexin homolog, found in Aspergillus fumigatus (strain ATCC MYA-4609 / CBS 101355 / FGSC A1100 / Af293) (Neosartorya fumigata).